The primary structure comprises 156 residues: Small ribosomal subunit protein uS7 (156 aa).

It belongs to the universal ribosomal protein uS7 family. In terms of assembly, part of the 30S ribosomal subunit. Contacts proteins S9 and S11.

Functionally, one of the primary rRNA binding proteins, it binds directly to 16S rRNA where it nucleates assembly of the head domain of the 30S subunit. Is located at the subunit interface close to the decoding center, probably blocks exit of the E-site tRNA. The chain is Small ribosomal subunit protein uS7 from Alkalilimnicola ehrlichii (strain ATCC BAA-1101 / DSM 17681 / MLHE-1).